Reading from the N-terminus, the 319-residue chain is Annexin A4 (319 aa).

At alanine 2 the chain carries N-acetylalanine. At threonine 7 the chain carries Phosphothreonine. Serine 12 carries the post-translational modification Phosphoserine. 4 Annexin repeats span residues 14–85 (FNAA…GMMT), 86–157 (PTVL…SLSA), 169–241 (ALMR…AIVK), and 245–316 (NKSA…ILCG). Residues lysine 213, lysine 293, and lysine 300 each carry the N6-acetyllysine modification.

This sequence belongs to the annexin family. In terms of assembly, monomer. Binds to SFTPA1 in a Ca(2+)-dependent manner.

The protein localises to the zymogen granule membrane. Its function is as follows. May play a role in alveolar type II cells through interaction with the surfactant protein SFTPA1 (SP-A). The sequence is that of Annexin A4 (ANXA4) from Bos taurus (Bovine).